The sequence spans 240 residues: Uridylate kinase (240 aa).

12–15 (KLSG) contacts ATP. UMP is bound at residue glycine 54. Residues glycine 55 and arginine 59 each contribute to the ATP site. UMP contacts are provided by residues aspartate 74 and 135–142 (TGNPFFTT). 3 residues coordinate ATP: threonine 162, tyrosine 168, and aspartate 171.

This sequence belongs to the UMP kinase family. In terms of assembly, homohexamer.

Its subcellular location is the cytoplasm. The catalysed reaction is UMP + ATP = UDP + ADP. Its pathway is pyrimidine metabolism; CTP biosynthesis via de novo pathway; UDP from UMP (UMPK route): step 1/1. Its activity is regulated as follows. Inhibited by UTP. Functionally, catalyzes the reversible phosphorylation of UMP to UDP. The chain is Uridylate kinase from Xanthomonas oryzae pv. oryzae (strain KACC10331 / KXO85).